Here is a 343-residue protein sequence, read N- to C-terminus: Biotin synthase (343 aa).

Positions N64–R291 constitute a Radical SAM core domain. C79, C83, and C86 together coordinate [4Fe-4S] cluster. Residues C123, C154, C214, and R286 each coordinate [2Fe-2S] cluster.

The protein belongs to the radical SAM superfamily. Biotin synthase family. In terms of assembly, homodimer. Requires [4Fe-4S] cluster as cofactor. [2Fe-2S] cluster is required as a cofactor.

It catalyses the reaction (4R,5S)-dethiobiotin + (sulfur carrier)-SH + 2 reduced [2Fe-2S]-[ferredoxin] + 2 S-adenosyl-L-methionine = (sulfur carrier)-H + biotin + 2 5'-deoxyadenosine + 2 L-methionine + 2 oxidized [2Fe-2S]-[ferredoxin]. Its pathway is cofactor biosynthesis; biotin biosynthesis; biotin from 7,8-diaminononanoate: step 2/2. Functionally, catalyzes the conversion of dethiobiotin (DTB) to biotin by the insertion of a sulfur atom into dethiobiotin via a radical-based mechanism. The polypeptide is Biotin synthase (Cupriavidus necator (strain ATCC 17699 / DSM 428 / KCTC 22496 / NCIMB 10442 / H16 / Stanier 337) (Ralstonia eutropha)).